A 194-amino-acid polypeptide reads, in one-letter code: Ribosomal RNA large subunit methyltransferase E (194 aa).

S-adenosyl-L-methionine-binding residues include glycine 48, tryptophan 50, aspartate 66, asparagine 82, and aspartate 110. Lysine 150 functions as the Proton acceptor in the catalytic mechanism.

The protein belongs to the class I-like SAM-binding methyltransferase superfamily. RNA methyltransferase RlmE family.

The protein resides in the cytoplasm. The catalysed reaction is uridine(2552) in 23S rRNA + S-adenosyl-L-methionine = 2'-O-methyluridine(2552) in 23S rRNA + S-adenosyl-L-homocysteine + H(+). Functionally, specifically methylates the uridine in position 2552 of 23S rRNA at the 2'-O position of the ribose in the fully assembled 50S ribosomal subunit. This Picrophilus torridus (strain ATCC 700027 / DSM 9790 / JCM 10055 / NBRC 100828 / KAW 2/3) protein is Ribosomal RNA large subunit methyltransferase E.